Consider the following 596-residue polypeptide: Elongation factor 4 (596 aa).

In terms of domain architecture, tr-type G spans 2-183; sequence NNIRNFSIIA…TIIRKIPPPK (182 aa). GTP is bound by residues 14–19 and 130–133; these read DHGKST and NKID.

The protein belongs to the TRAFAC class translation factor GTPase superfamily. Classic translation factor GTPase family. LepA subfamily.

The protein resides in the cell inner membrane. The enzyme catalyses GTP + H2O = GDP + phosphate + H(+). Functionally, required for accurate and efficient protein synthesis under certain stress conditions. May act as a fidelity factor of the translation reaction, by catalyzing a one-codon backward translocation of tRNAs on improperly translocated ribosomes. Back-translocation proceeds from a post-translocation (POST) complex to a pre-translocation (PRE) complex, thus giving elongation factor G a second chance to translocate the tRNAs correctly. Binds to ribosomes in a GTP-dependent manner. This chain is Elongation factor 4, found in Campylobacter fetus subsp. fetus (strain 82-40).